The chain runs to 375 residues: RING-H2 finger protein ATL16 (375 aa).

The segment at 1–20 (MDLSNRRNPLRDLSFPPPPP) is disordered. A helical transmembrane segment spans residues 39–59 (VAVIGILATAFLLVSYYVFVI). The RING-type; atypical zinc-finger motif lies at 138–180 (CSVCLSEFQDEEKLRIIPNCSHLFHIDCIDVWLQNNANCPLCR). 2 disordered regions span residues 223 to 266 (GSDR…DRGG) and 356 to 375 (SFGS…YFEP). Residues 238–257 (QERSNSGYLLNENTQNSISP) show a composition bias toward polar residues.

The protein belongs to the RING-type zinc finger family. ATL subfamily.

The protein localises to the membrane. It carries out the reaction S-ubiquitinyl-[E2 ubiquitin-conjugating enzyme]-L-cysteine + [acceptor protein]-L-lysine = [E2 ubiquitin-conjugating enzyme]-L-cysteine + N(6)-ubiquitinyl-[acceptor protein]-L-lysine.. The protein operates within protein modification; protein ubiquitination. This is RING-H2 finger protein ATL16 (ATL16) from Arabidopsis thaliana (Mouse-ear cress).